The chain runs to 163 residues: Xanthine-guanine phosphoribosyltransferase (163 aa).

Residues R43–G44 and D95–T103 each bind 5-phospho-alpha-D-ribose 1-diphosphate. Mg(2+) is bound at residue D96. Residues D99 and I142 each contribute to the guanine site. The xanthine site is built by D99 and I142. Residues D99–T103 and W141–I142 each bind GMP.

Belongs to the purine/pyrimidine phosphoribosyltransferase family. XGPT subfamily. As to quaternary structure, homotetramer. Mg(2+) is required as a cofactor.

The protein resides in the cell inner membrane. It catalyses the reaction GMP + diphosphate = guanine + 5-phospho-alpha-D-ribose 1-diphosphate. The enzyme catalyses XMP + diphosphate = xanthine + 5-phospho-alpha-D-ribose 1-diphosphate. The catalysed reaction is IMP + diphosphate = hypoxanthine + 5-phospho-alpha-D-ribose 1-diphosphate. Its pathway is purine metabolism; GMP biosynthesis via salvage pathway; GMP from guanine: step 1/1. It functions in the pathway purine metabolism; XMP biosynthesis via salvage pathway; XMP from xanthine: step 1/1. Purine salvage pathway enzyme that catalyzes the transfer of the ribosyl-5-phosphate group from 5-phospho-alpha-D-ribose 1-diphosphate (PRPP) to the N9 position of the 6-oxopurines guanine and xanthine to form the corresponding ribonucleotides GMP (guanosine 5'-monophosphate) and XMP (xanthosine 5'-monophosphate), with the release of PPi. To a lesser extent, also acts on hypoxanthine. This Nitratidesulfovibrio vulgaris (strain ATCC 29579 / DSM 644 / CCUG 34227 / NCIMB 8303 / VKM B-1760 / Hildenborough) (Desulfovibrio vulgaris) protein is Xanthine-guanine phosphoribosyltransferase.